The chain runs to 106 residues: Protein Rev (106 aa).

A homomultimerization region spans residues 8 to 16 (LIKFLYQSN). Residues 14 to 39 (QSNPPPKPEGTRQARRNRRRRWRERQ) form a disordered region. Positions 24–40 (TRQARRNRRRRWRERQR) match the Nuclear localization signal and RNA-binding (RRE) motif. The segment covering 26–37 (QARRNRRRRWRE) has biased composition (basic residues). The short motif at 63-74 (LQLPPLERLTLD) is the Nuclear export signal and binding to XPO1 element. Phosphoserine; by host is present on residues Ser-82 and Ser-89. The interval 82-106 (SGTQGVGSPQILVESPTVLESGTKE) is disordered.

This sequence belongs to the HIV-1 REV protein family. Homomultimer; when bound to the RRE. Multimeric assembly is essential for activity and may involve XPO1. Binds to human KPNB1, XPO1, TNPO1, RANBP5 and IPO7. Interacts with the viral Integrase. Interacts with human KHDRBS1. Interacts with human NAP1; this interaction decreases Rev multimerization and stimulates its activity. Interacts with human DEAD-box helicases DDX3 and DDX24; these interactions may serve for viral RNA export to the cytoplasm and packaging, respectively. Interacts with human PSIP1; this interaction may inhibit HIV-1 DNA integration by promoting dissociation of the Integrase-LEDGF/p75 complex. Post-translationally, asymmetrically arginine dimethylated at one site by host PRMT6. Methylation impairs the RNA-binding activity and export of viral RNA from the nucleus to the cytoplasm. In terms of processing, phosphorylated by protein kinase CK2. Presence of, and maybe binding to the N-terminus of the regulatory beta subunit of CK2 is necessary for CK2-mediated Rev's phosphorylation.

Its subcellular location is the host nucleus. The protein resides in the host nucleolus. The protein localises to the host cytoplasm. Its function is as follows. Escorts unspliced or incompletely spliced viral pre-mRNAs (late transcripts) out of the nucleus of infected cells. These pre-mRNAs carry a recognition sequence called Rev responsive element (RRE) located in the env gene, that is not present in fully spliced viral mRNAs (early transcripts). This function is essential since most viral proteins are translated from unspliced or partially spliced pre-mRNAs which cannot exit the nucleus by the pathway used by fully processed cellular mRNAs. Rev itself is translated from a fully spliced mRNA that readily exits the nucleus. Rev's nuclear localization signal (NLS) binds directly to KPNB1/Importin beta-1 without previous binding to KPNA1/Importin alpha-1. KPNB1 binds to the GDP bound form of RAN (Ran-GDP) and targets Rev to the nucleus. In the nucleus, the conversion from Ran-GDP to Ran-GTP dissociates Rev from KPNB1 and allows Rev's binding to the RRE in viral pre-mRNAs. Rev multimerization on the RRE via cooperative assembly exposes its nuclear export signal (NES) to the surface. Rev can then form a complex with XPO1/CRM1 and Ran-GTP, leading to nuclear export of the complex. Conversion from Ran-GTP to Ran-GDP mediates dissociation of the Rev/RRE/XPO1/RAN complex, so that Rev can return to the nucleus for a subsequent round of export. Beside KPNB1, also seems to interact with TNPO1/Transportin-1, RANBP5/IPO5 and IPO7/RANBP7 for nuclear import. The nucleoporin-like HRB/RIP is an essential cofactor that probably indirectly interacts with Rev to release HIV RNAs from the perinuclear region to the cytoplasm. The sequence is that of Protein Rev from Homo sapiens (Human).